The following is a 160-amino-acid chain: 6,7-dimethyl-8-ribityllumazine synthase (160 aa).

5-amino-6-(D-ribitylamino)uracil contacts are provided by residues tryptophan 28, 59–61 (SFE), and 82–84 (VII). 87-88 (GT) contributes to the (2S)-2-hydroxy-3-oxobutyl phosphate binding site. Histidine 90 functions as the Proton donor in the catalytic mechanism. Phenylalanine 115 is a binding site for 5-amino-6-(D-ribitylamino)uracil. Arginine 129 contributes to the (2S)-2-hydroxy-3-oxobutyl phosphate binding site.

It belongs to the DMRL synthase family.

It catalyses the reaction (2S)-2-hydroxy-3-oxobutyl phosphate + 5-amino-6-(D-ribitylamino)uracil = 6,7-dimethyl-8-(1-D-ribityl)lumazine + phosphate + 2 H2O + H(+). The protein operates within cofactor biosynthesis; riboflavin biosynthesis; riboflavin from 2-hydroxy-3-oxobutyl phosphate and 5-amino-6-(D-ribitylamino)uracil: step 1/2. In terms of biological role, catalyzes the formation of 6,7-dimethyl-8-ribityllumazine by condensation of 5-amino-6-(D-ribitylamino)uracil with 3,4-dihydroxy-2-butanone 4-phosphate. This is the penultimate step in the biosynthesis of riboflavin. The sequence is that of 6,7-dimethyl-8-ribityllumazine synthase from Clavibacter michiganensis subsp. michiganensis (strain NCPPB 382).